Consider the following 337-residue polypeptide: Adenosine deaminase-like protein (337 aa).

Residues H14 and H16 each coordinate Zn(2+). Residues H16, N18, H66, 98–101 (TTPK), and G171 each bind N(6)-methyl-AMP. H198 is a Zn(2+) binding site. N(6)-methyl-AMP is bound by residues E201, D276, and D277. The active-site Proton donor is the E201. Residue D276 participates in Zn(2+) binding.

This sequence belongs to the metallo-dependent hydrolases superfamily. Adenosine and AMP deaminases family. Monomer. Zn(2+) is required as a cofactor.

It catalyses the reaction N(6)-methyl-AMP + H2O + H(+) = IMP + methylamine. In terms of biological role, catalyzes the hydrolysis of the free cytosolic methylated adenosine nucleotide N(6)-methyl-AMP (N6-mAMP) to produce inositol monophosphate (IMP) and methylamine. Is required for the catabolism of cytosolic N6-mAMP, which is derived from the degradation of mRNA containing N6-methylated adenine (m6A). In Drosophila melanogaster (Fruit fly), this protein is Adenosine deaminase-like protein (Ada).